A 418-amino-acid chain; its full sequence is UPF0754 membrane protein alr5253 (418 aa).

2 helical membrane-spanning segments follow: residues 10–30 and 394–414; these read WSHL…GYFT and IVSL…AFFI.

It belongs to the UPF0754 family.

The protein resides in the cell inner membrane. This is UPF0754 membrane protein alr5253 from Nostoc sp. (strain PCC 7120 / SAG 25.82 / UTEX 2576).